A 178-amino-acid chain; its full sequence is Fatty-acid and retinol-binding protein 1 (178 aa).

An N-terminal signal peptide occupies residues 1–16; sequence MYHQLILMALIGVIMA. N-linked (GlcNAc...) asparagine glycans are attached at residues N44 and N75. Coiled coils occupy residues 67-89 and 123-153; these read DAAL…ELRN and KLDV…ELKA. N157 carries an N-linked (GlcNAc...) asparagine glycan.

This sequence belongs to the fatty-acid and retinol-binding protein (FARBP) family. Post-translationally, N-glycosylated.

The protein localises to the secreted. Its function is as follows. Binds retinol and different fatty acids. This chain is Fatty-acid and retinol-binding protein 1, found in Acanthocheilonema viteae (Filarial nematode worm).